Consider the following 587-residue polypeptide: 2-succinyl-5-enolpyruvyl-6-hydroxy-3-cyclohexene-1-carboxylate synthase (587 aa).

This sequence belongs to the TPP enzyme family. MenD subfamily. Homodimer. It depends on Mg(2+) as a cofactor. Mn(2+) is required as a cofactor. The cofactor is thiamine diphosphate.

It catalyses the reaction isochorismate + 2-oxoglutarate + H(+) = 5-enolpyruvoyl-6-hydroxy-2-succinyl-cyclohex-3-ene-1-carboxylate + CO2. It functions in the pathway quinol/quinone metabolism; 1,4-dihydroxy-2-naphthoate biosynthesis; 1,4-dihydroxy-2-naphthoate from chorismate: step 2/7. Its pathway is cofactor biosynthesis; phylloquinone biosynthesis. Catalyzes the thiamine diphosphate-dependent decarboxylation of 2-oxoglutarate and the subsequent addition of the resulting succinic semialdehyde-thiamine pyrophosphate anion to isochorismate to yield 2-succinyl-5-enolpyruvyl-6-hydroxy-3-cyclohexene-1-carboxylate (SEPHCHC). This chain is 2-succinyl-5-enolpyruvyl-6-hydroxy-3-cyclohexene-1-carboxylate synthase, found in Prochlorococcus marinus (strain MIT 9312).